We begin with the raw amino-acid sequence, 550 residues long: Hydroxylamine reductase (550 aa).

Positions 3, 6, 18, and 25 each coordinate [2Fe-2S] cluster. 8 residues coordinate hybrid [4Fe-2O-2S] cluster: His249, Glu273, Cys317, Cys405, Cys433, Cys458, Glu492, and Lys494. Cysteine persulfide is present on Cys405.

This sequence belongs to the HCP family. It depends on [2Fe-2S] cluster as a cofactor. The cofactor is hybrid [4Fe-2O-2S] cluster.

Its subcellular location is the cytoplasm. It catalyses the reaction A + NH4(+) + H2O = hydroxylamine + AH2 + H(+). In terms of biological role, catalyzes the reduction of hydroxylamine to form NH(3) and H(2)O. This chain is Hydroxylamine reductase, found in Salmonella agona (strain SL483).